Consider the following 106-residue polypeptide: Iron-sulfur cluster assembly protein CyaY (106 aa).

The protein belongs to the frataxin family.

Functionally, involved in iron-sulfur (Fe-S) cluster assembly. May act as a regulator of Fe-S biogenesis. The sequence is that of Iron-sulfur cluster assembly protein CyaY from Salmonella paratyphi B (strain ATCC BAA-1250 / SPB7).